The sequence spans 546 residues: Mercuric reductase (546 aa).

One can recognise an HMA domain in the interval 2-66; the sequence is NKFKVNISGM…AIDEANYQAG (65 aa). Residues Cys-13 and Cys-16 each contribute to the a metal cation site. FAD contacts are provided by Ala-96, Gly-116, and Thr-121. A disulfide bond links Cys-122 and Cys-127. FAD-binding residues include Lys-131 and Ala-195. NAD(+)-binding positions include 256–263 and Gly-346; that span reads GSGYIGME. Asp-387 and Val-395 together coordinate FAD. Cys-543 and Cys-544 together coordinate Hg(2+).

The protein belongs to the class-I pyridine nucleotide-disulfide oxidoreductase family. Homodimer. Requires FAD as cofactor.

The enzyme catalyses Hg + NADP(+) + H(+) = Hg(2+) + NADPH. With respect to regulation, uses NADPH as the preferred electron donor, but shows slight activity with NADH as well. Inhibited by Cu(2+), Cd(2+), Zn(2+) and Co(2+), with Cu(2+) showing the strongest inhibition. Enzyme activity is enhanced by b-mercaptoethanol and NaCl up to concentrations of 500 uM and 100 mM respectively, followed by inhibition at higher concentrations. In terms of biological role, resistance to Hg(2+) in bacteria appears to be governed by a specialized system which includes mercuric reductase. MerA protein is responsible for volatilizing mercury as Hg(0). Catalyzes reduction of Hg(2+) to elemental Hg, which is volatile and can diffuse out of cells passively. Plays a pivotal role in mercury resistance and cell protection. This Lysinibacillus sphaericus (Bacillus sphaericus) protein is Mercuric reductase.